The chain runs to 395 residues: Protein BUR2 (395 aa).

Disordered stretches follow at residues 1–31 (MSAT…ASSG) and 372–395 (AKQE…KPKI). Ser24 carries the phosphoserine modification.

In terms of assembly, belongs to the BUR kinase complex composed of SGV1/BUR1 and BUR2. Interacts with SGV1.

The protein resides in the nucleus. Component of the BUR kinase complex involved in transcription regulation. This complex phosphorylates 'Ser-120' of the UBC2/RAD6 ubiquitin-conjugating enzyme (E2), leading to monoubiquitination of histone H2B, the localization of the PAF1 complex to the chromatin, and the silencing of telomeric-associated genes. Also required for histone H3 'Lys-4' trimethylation. May phosphorylate the 'Ser-5' of the RBP1 carboxy-terminal domain (CTD) repeats. Necessary for the recovery from pheromone-induced growth arrest in the cell cycle G1 phase. Also required for vegetative growth itself. The kinase activity of the complex requires the presence of BUR2. Overexpression of BUR2 interferes with mitotic chromosome segregation. The protein is Protein BUR2 (BUR2) of Saccharomyces cerevisiae (strain ATCC 204508 / S288c) (Baker's yeast).